Reading from the N-terminus, the 200-residue chain is Methylthioribulose-1-phosphate dehydratase (200 aa).

His-90 and His-92 together coordinate Zn(2+).

The protein belongs to the aldolase class II family. MtnB subfamily. Zn(2+) serves as cofactor.

The catalysed reaction is 5-(methylsulfanyl)-D-ribulose 1-phosphate = 5-methylsulfanyl-2,3-dioxopentyl phosphate + H2O. The protein operates within amino-acid biosynthesis; L-methionine biosynthesis via salvage pathway; L-methionine from S-methyl-5-thio-alpha-D-ribose 1-phosphate: step 2/6. In terms of biological role, catalyzes the dehydration of methylthioribulose-1-phosphate (MTRu-1-P) into 2,3-diketo-5-methylthiopentyl-1-phosphate (DK-MTP-1-P). The chain is Methylthioribulose-1-phosphate dehydratase from Sodalis glossinidius (strain morsitans).